We begin with the raw amino-acid sequence, 427 residues long: TNF receptor-associated factor family protein DDB_G0285149 (427 aa).

The RING-type zinc-finger motif lies at 20–65 (CIVCTDLLSESHDKIQVNQCPHGHCLCSDCWTKQIENKKKECPICR). 2 TRAF-type zinc fingers span residues 122-178 (THFK…INKD) and 178-234 (DHLE…KHQA). Positions 284-415 (KYSNQWVIEN…GNKLTIKFEI (132 aa)) constitute an MATH domain.

It belongs to the TNF receptor-associated factor family. A subfamily.

The protein localises to the cytoplasm. Its function is as follows. Probable adapter protein and signal transducer that links members of the tumor necrosis factor receptor family to different signaling pathways by association with the receptor cytoplasmic domain and kinases. This Dictyostelium discoideum (Social amoeba) protein is TNF receptor-associated factor family protein DDB_G0285149.